Reading from the N-terminus, the 316-residue chain is Geminin coiled-coil domain-containing protein 1 (316 aa).

Residues 82-117 are a coiled coil; that stretch reads QISANKQLQDTLLQKEEELSRLHEENNKLKEFLNSA. Composition is skewed to polar residues over residues 134–155 and 207–234; these read GQSS…STPG and MSLQ…QAAT. 2 disordered regions span residues 134 to 160 and 207 to 269; these read GQSS…KAKR and MSLQ…DVAP. Thr153 is subject to Phosphothreonine; by cdk2. A compositionally biased stretch (low complexity) spans 235–252; sequence SCSLSPSQCSSASLPESE. The span at 253–262 shows a compositional bias: polar residues; that stretch reads TASPLSSPTY.

Belongs to the GEMC1 family. In terms of assembly, interacts with topbp1. Interacts with Cdc45l and the kinase cdk2-cyclin-E (the interaction is direct). Highly phosphorylated by cdk2; stimulates initiation of DNA replication. Expressed in most tissues. Enriched in proliferating cells from skin and gut.

It is found in the nucleus. Regulator of DNA replication. Promotes initiation of chromosomal DNA replication by mediating topbp1- and cdk2-dependent recruitment of cdc45l onto replication origins. This chain is Geminin coiled-coil domain-containing protein 1 (gmnc), found in Xenopus laevis (African clawed frog).